Consider the following 352-residue polypeptide: Phenylalanine--tRNA ligase alpha subunit (352 aa).

E258 provides a ligand contact to Mg(2+).

It belongs to the class-II aminoacyl-tRNA synthetase family. Phe-tRNA synthetase alpha subunit type 1 subfamily. In terms of assembly, tetramer of two alpha and two beta subunits. The cofactor is Mg(2+).

Its subcellular location is the cytoplasm. It catalyses the reaction tRNA(Phe) + L-phenylalanine + ATP = L-phenylalanyl-tRNA(Phe) + AMP + diphosphate + H(+). The chain is Phenylalanine--tRNA ligase alpha subunit from Staphylococcus aureus (strain NCTC 8325 / PS 47).